Reading from the N-terminus, the 66-residue chain is Large ribosomal subunit protein bL33c (66 aa).

Belongs to the bacterial ribosomal protein bL33 family.

It is found in the plastid. Its subcellular location is the chloroplast. This chain is Large ribosomal subunit protein bL33c, found in Nicotiana sylvestris (Wood tobacco).